Reading from the N-terminus, the 541-residue chain is Molybdate transporter 1 (541 aa).

5 helical membrane passes run 24 to 44, 58 to 78, 98 to 118, 137 to 157, and 168 to 188; these read LLLSEISGSLGDLGTLLPLLL, LLFSGLFNILTGLVFGVPLPV, TVAAGAWVGFAVLLLGGTGGL, AGMSLVVAAGGGMVRPLGWLW, and GLGEWLDSRALAVLAFGGLVV. The tract at residues 193 to 213 is disordered; that stretch reads QQQQQQQSGEKPQERRKKRSK. 2 consecutive transmembrane segments (helical) span residues 214-234 and 287-307; these read MPVQVPYALVLFLVGIMFAVV and MAIAQLPLTTLNSIIAASALA. Residues 317–366 form a disordered region; sequence PQLYADDESSDSPLSPSPSASSSSLSSAPPQTPSAETPKPLSSPTSAEEG. Low complexity predominate over residues 327-351; the sequence is DSPLSPSPSASSSSLSSAPPQTPSA. The next 2 helical transmembrane spans lie at 413–433 and 435–455; these read IILLGLTKFLLGLFFPGPGLL and LLGKFPKAFLGVMVLGAGVEL. A disordered region spans residues 510–541; sequence TEKGRGGEQGLLGEEEEEEEQGRVDEESPLLR.

The protein belongs to the SLC26A/SulP transporter (TC 2.A.53) family.

The protein localises to the vacuole membrane. Exports stored molybdate from the vacuole into the cytosol, making it available for molybdate cofactor (Moco) biosynthesis. Plays a role in molybdate homeostasis as high cytosolic levels of molybdate are toxic to cells. Not required for molybdate import into cells. The polypeptide is Molybdate transporter 1 (Neurospora crassa (strain ATCC 24698 / 74-OR23-1A / CBS 708.71 / DSM 1257 / FGSC 987)).